A 316-amino-acid chain; its full sequence is HPr kinase/phosphorylase (316 aa).

Active-site residues include His-143 and Lys-164. 158–165 serves as a coordination point for ATP; the sequence is GEAGSGKS. Ser-165 contacts Mg(2+). Asp-182 (proton acceptor; for phosphorylation activity. Proton donor; for dephosphorylation activity) is an active-site residue. The interval 206 to 215 is important for the catalytic mechanism of both phosphorylation and dephosphorylation; sequence LEVRGLGVLN. A Mg(2+)-binding site is contributed by Glu-207. Residue Arg-251 is part of the active site. The interval 272-277 is important for the catalytic mechanism of dephosphorylation; it reads PVMPGR.

This sequence belongs to the HPrK/P family. As to quaternary structure, homohexamer. Mg(2+) is required as a cofactor.

The enzyme catalyses [HPr protein]-L-serine + ATP = [HPr protein]-O-phospho-L-serine + ADP + H(+). The catalysed reaction is [HPr protein]-O-phospho-L-serine + phosphate + H(+) = [HPr protein]-L-serine + diphosphate. Catalyzes the ATP- as well as the pyrophosphate-dependent phosphorylation of a specific serine residue in HPr, a phosphocarrier protein of the phosphoenolpyruvate-dependent sugar phosphotransferase system (PTS). HprK/P also catalyzes the pyrophosphate-producing, inorganic phosphate-dependent dephosphorylation (phosphorolysis) of seryl-phosphorylated HPr (P-Ser-HPr). The polypeptide is HPr kinase/phosphorylase (Xylella fastidiosa (strain 9a5c)).